Here is a 148-residue protein sequence, read N- to C-terminus: Sperm-specific protein PHI-2B (148 aa).

The segment covering 1–35 has biased composition (basic residues); it reads PSPSRRSRSRSRSRSKSPKRSPAKKARKTPKKRRA. Disordered regions lie at residues 1-44 and 97-148; these read PSPS…KPST and GVLV…KSNN. The H15 domain maps to 40-119; it reads KKPSTLSMIV…GATGSFRVGK (80 aa). Residues 124–148 show a composition bias toward basic residues; that stretch reads PKKKAKKAKSPKKKSSKKSSNKSNN.

This sequence belongs to the histone H1/H5 family. In terms of tissue distribution, sperm.

It is found in the nucleus. The protein resides in the chromosome. In terms of biological role, linker histones are implicated in chromatin remodeling and/or transcriptional regulation during spermiogenesis, the process of spermatid maturation into spermatozoa. This chain is Sperm-specific protein PHI-2B, found in Mytilus californianus (California mussel).